The following is a 287-amino-acid chain: 4-diphosphocytidyl-2-C-methyl-D-erythritol kinase (287 aa).

Residue lysine 22 is part of the active site. ATP is bound at residue 102 to 112 (PAAAGIGGGSS). The active site involves aspartate 139.

It belongs to the GHMP kinase family. IspE subfamily.

The catalysed reaction is 4-CDP-2-C-methyl-D-erythritol + ATP = 4-CDP-2-C-methyl-D-erythritol 2-phosphate + ADP + H(+). The protein operates within isoprenoid biosynthesis; isopentenyl diphosphate biosynthesis via DXP pathway; isopentenyl diphosphate from 1-deoxy-D-xylulose 5-phosphate: step 3/6. Its function is as follows. Catalyzes the phosphorylation of the position 2 hydroxy group of 4-diphosphocytidyl-2C-methyl-D-erythritol. This Dinoroseobacter shibae (strain DSM 16493 / NCIMB 14021 / DFL 12) protein is 4-diphosphocytidyl-2-C-methyl-D-erythritol kinase.